The following is a 389-amino-acid chain: tRNA-specific 2-thiouridylase MnmA (389 aa).

ATP-binding positions include 34 to 41 and Leu-60; that span reads AMSGGVDS. Cys-128 functions as the Nucleophile in the catalytic mechanism. A disulfide bond links Cys-128 and Cys-225. Gly-152 is a binding site for ATP. Residues 174–176 are interaction with tRNA; that stretch reads RDQ. The active-site Cysteine persulfide intermediate is the Cys-225.

This sequence belongs to the MnmA/TRMU family.

The protein localises to the cytoplasm. The enzyme catalyses S-sulfanyl-L-cysteinyl-[protein] + uridine(34) in tRNA + AH2 + ATP = 2-thiouridine(34) in tRNA + L-cysteinyl-[protein] + A + AMP + diphosphate + H(+). In terms of biological role, catalyzes the 2-thiolation of uridine at the wobble position (U34) of tRNA, leading to the formation of s(2)U34. This Paracoccus denitrificans (strain Pd 1222) protein is tRNA-specific 2-thiouridylase MnmA.